The sequence spans 853 residues: G-type lectin S-receptor-like serine/threonine-protein kinase SRK (853 aa).

A signal peptide spans 1–31 (MRGELPNKHHSYTFFVFLFFFLILFPDLSIS). At 32–441 (VNTLSATESL…FGERRTIRGK (410 aa)) the chain is on the extracellular side. The 121-residue stretch at 34-154 (TLSATESLTI…KINESDEFLW (121 aa)) folds into the Bulb-type lectin domain. Residues asparagine 46, asparagine 120, asparagine 147, and asparagine 243 are each glycosylated (N-linked (GlcNAc...) asparagine). One can recognise an EGF-like; atypical domain in the interval 293–329 (PKDTCDLYGICGPYAYCDMSTSPTCNCIKGFQPLSPQ). Disulfide bonds link cysteine 297–cysteine 309, cysteine 303–cysteine 317, cysteine 378–cysteine 403, and cysteine 382–cysteine 388. Residues 348-428 (CGEDRFFRLM…DGQDLFVRLA (81 aa)) enclose the PAN domain. Asparagine 387 is a glycosylation site (N-linked (GlcNAc...) asparagine). A helical membrane pass occupies residues 442–462 (IIGLIIGISLMLVLSFIIYCF). The Cytoplasmic segment spans residues 463–853 (WKKKQKRARA…QITVSVINAR (391 aa)). In terms of domain architecture, Protein kinase spans 524–802 (FSDSNILGRG…PKMSSVVLML (279 aa)). Residues 530 to 538 (LGRGGFGIV) and lysine 552 each bind ATP. Serine 558 bears the Phosphoserine mark. Positions 613–631 (TQSSNKLNWQTRFSIINGI) are caM-binding. The active-site Proton acceptor is the aspartate 650. Phosphoserine is present on residues serine 654 and serine 667. Threonine 684 carries the post-translational modification Phosphothreonine. Residues 807–838 (GEIPQPKRPGYCVGRSSLDTADSSSSTKRDSE) form a disordered region. Over residues 822 to 832 (SSLDTADSSSS) the composition is skewed to low complexity. Phosphoserine is present on serine 831.

This sequence belongs to the protein kinase superfamily. Ser/Thr protein kinase family.

The protein resides in the cell membrane. The enzyme catalyses L-seryl-[protein] + ATP = O-phospho-L-seryl-[protein] + ADP + H(+). It carries out the reaction L-threonyl-[protein] + ATP = O-phospho-L-threonyl-[protein] + ADP + H(+). Its function is as follows. Female specificity determinant of self-incompatibility. This is G-type lectin S-receptor-like serine/threonine-protein kinase SRK (SRK) from Arabidopsis thaliana (Mouse-ear cress).